The following is a 446-amino-acid chain: Sterile alpha motif domain-containing protein 7 (446 aa).

The tract at residues 94-168 (HTARTEMEMY…NLQGNPMLAA (75 aa)) is required for localization to nuclear polycomb bodies. Disordered stretches follow at residues 187–207 (NTGNQKALDSDAESSKSQAEE) and 225–277 (KDPD…AWDD). Residues 232 to 249 (PSNQKSSETNEKPTTALA) are compositionally biased toward polar residues. Residues 327-392 (WTVDDVHSFI…SQVSQHVGSM (66 aa)) form the SAM domain.

In terms of assembly, monomer, homodimer and homooligomer. Component of a Polycomb group (PcG) multiprotein PRC1-like complex. Interacts with PHC2, NR2E3 and SAMD11. Interacts with RNF1 in a PHC2-dependent manner. As to expression, expressed in the retina (at protein level). Expressed in the retinal inner and outer nuclear layers.

It localises to the nucleus. Its subcellular location is the cytoplasm. Component of a Polycomb group (PcG) multiprotein PRC1-like complex, essential for establishing rod photoreceptor cell identity and function by silencing nonrod gene expression in developing rod photoreceptor cells. Via its association with the PRC1-like complex, promotes epigenetic repressive marks H3K27me3 and H2AK119ub marks in nonrod genes, silencing their transcription. Represses Crx-controlled photoreceptor-specific gene expression. The chain is Sterile alpha motif domain-containing protein 7 (SAMD7) from Homo sapiens (Human).